Reading from the N-terminus, the 103-residue chain is Conantokin R1-A (103 aa).

Residues 1–21 (MQLYTYLYLLVPLVTFHLILG) form the signal peptide. Residues 22-79 (TGTLDHGGALTERRSTDATALKPEPVLQKSAARSTDDNGKDRLTQMKRILKKRGNNPR) constitute a propeptide that is removed on maturation. The disordered stretch occupies residues 34–83 (RRSTDATALKPEPVLQKSAARSTDDNGKDRLTQMKRILKKRGNNPRADEE). The segment covering 55 to 65 (STDDNGKDRLT) has biased composition (basic and acidic residues). 3 positions are modified to 4-carboxyglutamate: E82, E83, and E89.

The protein belongs to the conotoxin B superfamily. Requires Ca(2+) as cofactor. Mg(2+) is required as a cofactor. As to expression, expressed by the venom duct.

The protein resides in the secreted. In terms of biological role, conantokins inhibit N-methyl-D-aspartate (NMDA) receptors. This toxin has the highest potency for the NR2B/GRIN2B subunit (IC(50)=0.11 uM), followed by NR2D/GRIN2D (IC(50)=0.48 uM), NR2A/GRIN2A (IC(50)=2.1 uM), and NR2C/GRIN2C (IC(50)=6.1 uM) subunits when tested on rat receptors. In Conus rolani (Cone snail), this protein is Conantokin R1-A.